The following is a 181-amino-acid chain: U1 small nuclear ribonucleoprotein C (181 aa).

The segment at 2-34 (PKCDYCDVYLTHDSMSVRKAHNSGRNHLRNVVD) adopts a Matrin-type zinc-finger fold. 2 stretches are compositionally biased toward pro residues: residues 129–143 (PGMPAGMPFPPPGGL) and 150–174 (PIPPPGGFPGMPPPGQGFPGMPPPG). The interval 129 to 181 (PGMPAGMPFPPPGGLPPNFQFPIPPPGGFPGMPPPGQGFPGMPPPGGNHDERR) is disordered.

Belongs to the U1 small nuclear ribonucleoprotein C family. In terms of assembly, U1 snRNP is composed of the 7 core Sm proteins B/B', D1, D2, D3, E, F and G that assemble in a heptameric protein ring on the Sm site of the small nuclear RNA to form the core snRNP, and at least 3 U1 snRNP-specific proteins U1-70K, U1-A and U1-C. U1-C interacts with U1 snRNA and the 5' splice-site region of the pre-mRNA.

It localises to the nucleus. Its function is as follows. Component of the spliceosomal U1 snRNP, which is essential for recognition of the pre-mRNA 5' splice-site and the subsequent assembly of the spliceosome. U1-C is directly involved in initial 5' splice-site recognition for both constitutive and regulated alternative splicing. The interaction with the 5' splice-site seems to precede base-pairing between the pre-mRNA and the U1 snRNA. Stimulates commitment or early (E) complex formation by stabilizing the base pairing of the 5' end of the U1 snRNA and the 5' splice-site region. This chain is U1 small nuclear ribonucleoprotein C, found in Sclerotinia sclerotiorum (strain ATCC 18683 / 1980 / Ss-1) (White mold).